Reading from the N-terminus, the 898-residue chain is Netrin receptor UNC5A (898 aa).

The N-terminal stretch at 1-25 (MAVRPGLWPALLGIVLTAWLRGSGA) is a signal peptide. The Extracellular portion of the chain corresponds to 26–361 (QQSATVANPV…TSSGPEDVAL (336 aa)). Positions 44-141 (PHFLVEPEDV…SGTTKSQKAY (98 aa)) constitute an Ig-like domain. Disulfide bonds link Cys-65–Cys-126, Cys-77–Cys-124, and Cys-170–Cys-221. 2 N-linked (GlcNAc...) asparagine glycosylation sites follow: Asn-107 and Asn-218. Residues 155 to 234 (PLAKEVSLEQ…NIVARRRSAS (80 aa)) enclose the Ig-like C2-type domain. TSP type-1 domains are found at residues 242–296 (NGGW…TLCP) and 298–350 (DGSW…DLCL). 3 C-linked (Man) tryptophan glycosylation sites follow: Trp-245, Trp-248, and Trp-251. Disulfide bonds link Cys-254-Cys-291, Cys-258-Cys-295, and Cys-269-Cys-281. Residues Trp-301 and Trp-304 are each glycosylated (C-linked (Man) tryptophan). 3 disulfide bridges follow: Cys-310/Cys-344, Cys-314/Cys-349, and Cys-322/Cys-334. Asn-343 carries N-linked (GlcNAc...) asparagine glycosylation. Residues 362–382 (YIGLVAVAVCLILLLLVLVLI) traverse the membrane as a helical segment. Residues 383-898 (YCRKKEGLDS…GLFTVSEAEC (516 aa)) are Cytoplasmic-facing. A ZU5 domain is found at 497-640 (NMAYGTFNFL…LGRFALVGEA (144 aa)). The segment at 661–679 (SLEYNIRVYCLHDTHDALK) is interaction with DCC. In terms of domain architecture, Death spans 817-897 (QKIITSLDPP…AGLFTVSEAE (81 aa)).

Belongs to the unc-5 family. As to quaternary structure, homodimer and homooligomer. Interacts with the cytoplasmic part of DCC. Interacts with MAGED1. Interacts with PRKCABP, possibly mediating some interaction with PKC. Interacts (via extracellular domain) with FLRT2 (via extracellular domain). Interacts (via extracellular domain) with FLRT3 (via extracellular domain). In terms of processing, phosphorylated on cytoplasmic tyrosine residues. Phosphorylated by PKC in vitro. Proteolytically cleaved by caspases during apoptosis. The cleavage does not take place when the receptor is associated with netrin ligand. Its cleavage by caspases is required to induce apoptosis. Post-translationally, the two extracellular TSRs of UNC5A contain WxxWxxWxxC motifs that can be C-mannosylated on all tryptophans. DPY19L1 preferentially mannosylates the first two tryptophans and DPY19L3 prefers the third. C-mannosylation by DPY19L1 is required for transport of UNC5A from the endoplasmic reticulum to the cell surface. Restricted to central nervous system.

The protein localises to the cell membrane. It is found in the membrane raft. The protein resides in the cell projection. Its subcellular location is the neuron projection. In terms of biological role, receptor for netrin required for axon guidance. Functions in the netrin signaling pathway and promotes neurite outgrowth in response to NTN1. Mediates axon repulsion of neuronal growth cones in the developing nervous system in response to netrin. Axon repulsion in growth cones may be mediated by its association with DCC that may trigger signaling for repulsion. It also acts as a dependence receptor required for apoptosis induction when not associated with netrin ligand. The protein is Netrin receptor UNC5A (Unc5a) of Mus musculus (Mouse).